A 328-amino-acid chain; its full sequence is Sterol demethylase protein B (328 aa).

Belongs to the NAD(P)-dependent epimerase/dehydratase family.

The enzyme catalyses a 3beta-hydroxy-4alpha-methylsteroid-4beta-carboxylate + NAD(+) = a 4alpha-methyl-3-oxosteroid + CO2 + NADH. It catalyses the reaction a 3beta-hydroxy-4alpha-methylsteroid-4beta-carboxylate + NADP(+) = a 4alpha-methyl-3-oxosteroid + CO2 + NADPH. It carries out the reaction 4beta-carboxy-4alpha-methyl-5alpha-cholesta-8,24-dien-3beta-ol + NAD(+) = 3-dehydro-4alpha-methylzymosterol + CO2 + NADH. The catalysed reaction is 4beta-carboxy-4alpha-methyl-5alpha-cholesta-8,24-dien-3beta-ol + NADP(+) = 3-dehydro-4alpha-methylzymosterol + CO2 + NADPH. The enzyme catalyses 3-dehydro-4alpha-methylzymosterol + NADPH + H(+) = 4alpha-methylzymosterol + NADP(+). It functions in the pathway steroid biosynthesis; sterol biosynthesis. Its function is as follows. Participates in the biosynthesis of bacterial sterols. Together with SdmA, removes one methyl group from the C-4 position of 4,4-dimethylated steroid molecules. SdmB catalyzes an oxidative decarboxylation that results in reduction of the 3beta-hydroxy group at the C-3 carbon to an oxo group. It also functions as a ketoreductase that converts the C-3 oxo group back to a hydroxyl group after C-4 demethylation. The protein is Sterol demethylase protein B of Methylococcus capsulatus (strain ATCC 33009 / NCIMB 11132 / Bath).